Reading from the N-terminus, the 152-residue chain is Transposase for insertion sequence element IS200 (152 aa).

Mg(2+)-binding residues include H61 and H63. Y125 serves as the catalytic Nucleophile. Q129 is a binding site for Mg(2+).

The protein belongs to the transposase 17 family. As to quaternary structure, homodimer. It depends on Mg(2+) as a cofactor.

Its function is as follows. Transposase responsible for transposition of the IS200 insertion sequence (IS) element. Transposition occurs in 2 main steps, excision from the donor DNA 'top strand' into a single strand circle and its subsequent reinsertion into the DNA target. This increases the copy number of the IS. In Salmonella typhi, this protein is Transposase for insertion sequence element IS200 (tnpA1).